Here is a 362-residue protein sequence, read N- to C-terminus: [LysW]-lysine hydrolase (362 aa).

Histidine 69 contributes to the Zn(2+) binding site. Aspartate 71 is an active-site residue. Position 94 (aspartate 94) interacts with Zn(2+). The active-site Proton acceptor is the glutamate 127. Glutamate 128, glutamate 151, and histidine 334 together coordinate Zn(2+).

This sequence belongs to the peptidase M20A family. LysK subfamily. Zn(2+) is required as a cofactor. Co(2+) serves as cofactor.

It localises to the cytoplasm. It carries out the reaction [amino-group carrier protein]-C-terminal-gamma-(L-lysyl)-L-glutamate + H2O = [amino-group carrier protein]-C-terminal-L-glutamate + L-lysine. It functions in the pathway amino-acid biosynthesis; L-lysine biosynthesis via AAA pathway; L-lysine from L-alpha-aminoadipate (Thermus route): step 5/5. Its function is as follows. Catalyzes the release of L-lysine from [LysW]-gamma-L-lysine. This Deinococcus radiodurans (strain ATCC 13939 / DSM 20539 / JCM 16871 / CCUG 27074 / LMG 4051 / NBRC 15346 / NCIMB 9279 / VKM B-1422 / R1) protein is [LysW]-lysine hydrolase.